The following is a 363-amino-acid chain: Guanine nucleotide-binding protein alpha-11 subunit (363 aa).

The G-alpha domain occupies 26-363 (KMLKILLLGG…KISMEKVGFM (338 aa)). The tract at residues 29–42 (KILLLGGPECGKST) is G1 motif. GTP is bound by residues 34-41 (GGPECGKS), 172-178 (LRARVPT), 197-201 (DVGGQ), 276-279 (NKID), and Ala-335. Mg(2+)-binding residues include Ser-41 and Thr-178. Residues 170–178 (DVLRARVPT) form a G2 motif region. Residues 193-202 (LRMVDVGGQR) form a G3 motif region. The tract at residues 272–279 (ILFLNKID) is G4 motif. The tract at residues 333-338 (TNATDT) is G5 motif.

This sequence belongs to the G-alpha family. In terms of assembly, g proteins are composed of 3 units; alpha, beta and gamma. The alpha chain contains the guanine nucleotide binding site. In terms of tissue distribution, expressed in ADL and ASH neurons.

Its function is as follows. Guanine nucleotide-binding proteins (G proteins) are involved as modulators or transducers in various transmembrane signaling systems. Mediates the transduction of food and serotonin signals, which modulates the avoidance response to the odorant octanol. Has a role in lifespan to promote longevity. The chain is Guanine nucleotide-binding protein alpha-11 subunit (gpa-11) from Caenorhabditis elegans.